Reading from the N-terminus, the 256-residue chain is Acetyl-coenzyme A carboxylase carboxyl transferase subunit alpha (256 aa).

The 236-residue stretch at 1-236 (MTDVARILKE…KSHLIDEITQ (236 aa)) folds into the CoA carboxyltransferase C-terminal domain.

It belongs to the AccA family. Acetyl-CoA carboxylase is a heterohexamer composed of biotin carboxyl carrier protein (AccB), biotin carboxylase (AccC) and two subunits each of ACCase subunit alpha (AccA) and ACCase subunit beta (AccD).

It localises to the cytoplasm. It carries out the reaction N(6)-carboxybiotinyl-L-lysyl-[protein] + acetyl-CoA = N(6)-biotinyl-L-lysyl-[protein] + malonyl-CoA. The protein operates within lipid metabolism; malonyl-CoA biosynthesis; malonyl-CoA from acetyl-CoA: step 1/1. Its function is as follows. Component of the acetyl coenzyme A carboxylase (ACC) complex. First, biotin carboxylase catalyzes the carboxylation of biotin on its carrier protein (BCCP) and then the CO(2) group is transferred by the carboxyltransferase to acetyl-CoA to form malonyl-CoA. The protein is Acetyl-coenzyme A carboxylase carboxyl transferase subunit alpha of Streptococcus equi subsp. equi (strain 4047).